The chain runs to 236 residues: Dual specificity protein phosphatase 15 (236 aa).

Residue Gly-2 is the site of N-myristoyl glycine attachment. The Tyrosine-protein phosphatase domain occupies 4–144; it reads GMTKVLPGLY…LEEFGWANSQ (141 aa). Catalysis depends on Cys-88, which acts as the Phosphocysteine intermediate. A disordered region spans residues 178–213; sequence GPGTSAPSATTASSAASEGTLQRLVPRSPRESHRPL. The span at 181–194 shows a compositional bias: low complexity; that stretch reads TSAPSATTASSAAS.

The protein belongs to the protein-tyrosine phosphatase family. Non-receptor class dual specificity subfamily.

Its subcellular location is the cell membrane. It catalyses the reaction O-phospho-L-tyrosyl-[protein] + H2O = L-tyrosyl-[protein] + phosphate. The enzyme catalyses O-phospho-L-seryl-[protein] + H2O = L-seryl-[protein] + phosphate. The catalysed reaction is O-phospho-L-threonyl-[protein] + H2O = L-threonyl-[protein] + phosphate. Functionally, may play a role in the regulation of oligodendrocyte differentiation. May play a role in the regulation of myelin formation. Involved in the regulation of Erk1/2 phosphorylation in Schwann cells; the signaling may be linked to the regulation of myelination. May dephosphorylate MAPK13, ATF2, ERBB3, PDGFRB and SNX6. This Rattus norvegicus (Rat) protein is Dual specificity protein phosphatase 15 (Dusp15).